A 572-amino-acid polypeptide reads, in one-letter code: MEENIVSENNMKHRSSVYDSMVKSPNRAMLRATGMTDDSFEKPIVGVISTWAENTPCNIHLHGFGQIAKEGVKDAGAWPVQFGTITVADGIAMGTPGMRFSLTSRDIIADSIEAAMGGHNVDAFVAIGGCDKNMPGSMIAIANMDIPAIFAYGGTIAPGNLNGKDIDLVSVFEGIGKWNHGDMTAEEVKNLECNACPGPGGCGGMYTANTMATAIEVMGMSLPGSSSHPAESAEKKADIEEAGRAVVKMLEMGLKPSDILTREAFEDAITVTMALGGSTNATLHLLAIAHAANVDLTLEDFNDFQERVPHLADLKPSGQYVFQDLYNVGGVPAVMKYLLKNGFLHGDRITCTGKTVAENLEAFDDLTPGQKVIMPLENPKRADGPLIILKGNLAPEGAVAKVSGVKVRNITGPAKVFDSEEDAIEAVLSDEIVDGDVVVVRFVGPKGGPGMPEMLSLSSMIVGKGQGDKVALLTDGRFSGGTYGLVVGHIAPEAQVGGPIAYLRTGDMVTVDQDTKEITMHVPDEELAKRKAETELPPLYSRGVLGKYAHIVSSASRGAVTDFWNMDKSGKA.

Cys57 lines the [2Fe-2S] cluster pocket. Asp89 lines the Mg(2+) pocket. A [2Fe-2S] cluster-binding site is contributed by Cys130. Mg(2+) is bound by residues Asp131 and Lys132. Lys132 carries the post-translational modification N6-carboxylysine. Cys202 lines the [2Fe-2S] cluster pocket. Glu453 provides a ligand contact to Mg(2+). The active-site Proton acceptor is Ser479.

It belongs to the IlvD/Edd family. In terms of assembly, homodimer. It depends on [2Fe-2S] cluster as a cofactor. Requires Mg(2+) as cofactor.

It catalyses the reaction (2R)-2,3-dihydroxy-3-methylbutanoate = 3-methyl-2-oxobutanoate + H2O. The enzyme catalyses (2R,3R)-2,3-dihydroxy-3-methylpentanoate = (S)-3-methyl-2-oxopentanoate + H2O. The protein operates within amino-acid biosynthesis; L-isoleucine biosynthesis; L-isoleucine from 2-oxobutanoate: step 3/4. It functions in the pathway amino-acid biosynthesis; L-valine biosynthesis; L-valine from pyruvate: step 3/4. Its function is as follows. Functions in the biosynthesis of branched-chain amino acids. Catalyzes the dehydration of (2R,3R)-2,3-dihydroxy-3-methylpentanoate (2,3-dihydroxy-3-methylvalerate) into 2-oxo-3-methylpentanoate (2-oxo-3-methylvalerate) and of (2R)-2,3-dihydroxy-3-methylbutanoate (2,3-dihydroxyisovalerate) into 2-oxo-3-methylbutanoate (2-oxoisovalerate), the penultimate precursor to L-isoleucine and L-valine, respectively. The polypeptide is Dihydroxy-acid dehydratase (Streptococcus thermophilus (strain CNRZ 1066)).